Consider the following 671-residue polypeptide: cGMP-dependent protein kinase 1 (671 aa).

At serine 2 the chain carries N-acetylserine. Positions 2 to 59 (SELEEDFAKILMLKEERIKELEKRLSEKEEEIQELKRKLHKCQSVLPVPSTHIGPRTT) form a coiled coil. Residues 2-102 (SELEEDFAKI…LIKEAILDND (101 aa)) are required for dimerization. Residues 9 to 44 (AKILMLKEERIKELEKRLSEKEEEIQELKRKLHKCQ) are leucine-zipper. Residues 50-75 (PSTHIGPRTTRAQGISAEPQTYRSFH) are autoinhibitory domain. Threonine 59 is modified (phosphothreonine; by autocatalysis). Residues 103–220 (FMKNLELSQI…EYMEFLKSVP (118 aa)) are cGMP-binding, high affinity. Residues 167-170 (GELA) and 177-178 (RT) contribute to the 3',5'-cyclic AMP site. Residues 167–170 (GELA), 177–178 (RT), arginine 282, 291–294 (GEKA), 301–302 (RT), and tyrosine 336 each bind 3',5'-cyclic GMP. The interval 221–341 (TFQSLPEEIL…SNKAYEDAEA (121 aa)) is cGMP-binding, low affinity. One can recognise a Protein kinase domain in the interval 360–619 (FNIIDTLGVG…VKDIQKHKWF (260 aa)). ATP contacts are provided by residues 366-374 (LGVGGFGRV) and lysine 390. Aspartate 484 serves as the catalytic Proton acceptor. Threonine 515 is subject to Phosphothreonine. The 52-residue stretch at 620 to 671 (EGFNWEGLRKGTLTPPIIPSVASPTDTSNFDSFPEDNDEPPPDDNSGWDIDF) folds into the AGC-kinase C-terminal domain. Positions 635–671 (PIIPSVASPTDTSNFDSFPEDNDEPPPDDNSGWDIDF) are disordered. Over residues 652–661 (FPEDNDEPPP) the composition is skewed to acidic residues.

Belongs to the protein kinase superfamily. AGC Ser/Thr protein kinase family. cGMP subfamily. Isoform alpha: parallel homodimer or heterodimer and also heterotetramer. Interacts directly with PPP1R12A. Non-covalent dimer of dimer of PRKG1-PRKG1 and PPP1R12A-PPP1R12A. This interaction targets PRKG1 to stress fibers to mediate smooth muscle cell relaxation and vasodilation in responses to rises in cGMP. Isoform beta: antiparallel homodimer. Part of cGMP kinase signaling complex at least composed of ACTA2/alpha-actin, CNN1/calponin H1, PLN/phospholamban, PRKG1 and ITPR1. Interacts with IRAG1. Forms a stable complex with ITPR1, IRAG1, and isoform beta of PRKG1. Interacts with TRPC7 (via ankyrin repeat domain). Isoform alpha interacts with RGS2. Interacts with GTF2I. Autophosphorylation increases kinase activity. Post-translationally, 65 kDa monomer is produced by proteolytic cleavage. In terms of tissue distribution, high concentrations are detected in various smooth muscle: lung, rumen, trachea, aorta, uterus and stomach. Isoform alpha is expressed predominantly in heart, cerebellum and lung, whereas the beta isoform is expressed in high concentrations in trachea, aorta, stomach and uterus.

It localises to the cytoplasm. The enzyme catalyses L-seryl-[protein] + ATP = O-phospho-L-seryl-[protein] + ADP + H(+). The catalysed reaction is L-threonyl-[protein] + ATP = O-phospho-L-threonyl-[protein] + ADP + H(+). In the absence of cGMP, PRKG1 activity is suppressed by autoinhibitory contacts. Its function is as follows. Serine/threonine protein kinase that acts as a key mediator of the nitric oxide (NO)/cGMP signaling pathway. GMP binding activates PRKG1, which phosphorylates serines and threonines on many cellular proteins. Numerous protein targets for PRKG1 phosphorylation are implicated in modulating cellular calcium, but the contribution of each of these targets may vary substantially among cell types. Proteins that are phosphorylated by PRKG1 regulate platelet activation and adhesion, smooth muscle contraction, cardiac function, gene expression, feedback of the NO-signaling pathway, and other processes involved in several aspects of the CNS like axon guidance, hippocampal and cerebellar learning, circadian rhythm and nociception. Smooth muscle relaxation is mediated through lowering of intracellular free calcium, by desensitization of contractile proteins to calcium, and by decrease in the contractile state of smooth muscle or in platelet activation. Regulates intracellular calcium levels via several pathways: phosphorylates IRAG1 and inhibits IP3-induced Ca(2+) release from intracellular stores, phosphorylation of KCNMA1 (BKCa) channels decreases intracellular Ca(2+) levels, which leads to increased opening of this channel. PRKG1 phosphorylates the canonical transient receptor potential channel (TRPC) family which inactivates the associated inward calcium current. Another mode of action of NO/cGMP/PKGI signaling involves PKGI-mediated inactivation of the Ras homolog gene family member A (RhoA). Phosphorylation of RHOA by PRKG1 blocks the action of this protein in myriad processes: regulation of RHOA translocation; decreasing contraction; controlling vesicle trafficking, reduction of myosin light chain phosphorylation resulting in vasorelaxation. Activation of PRKG1 by NO signaling also alters gene expression in a number of tissues. In smooth muscle cells, increased cGMP and PRKG1 activity influence expression of smooth muscle-specific contractile proteins, levels of proteins in the NO/cGMP signaling pathway, down-regulation of the matrix proteins osteopontin and thrombospondin-1 to limit smooth muscle cell migration and phenotype. Regulates vasodilator-stimulated phosphoprotein (VASP) functions in platelets and smooth muscle. The sequence is that of cGMP-dependent protein kinase 1 (PRKG1) from Bos taurus (Bovine).